The primary structure comprises 196 residues: ATP-dependent Clp protease proteolytic subunit (196 aa).

The Nucleophile role is filled by Ser101. His126 is an active-site residue.

This sequence belongs to the peptidase S14 family. Component of the chloroplastic Clp protease core complex.

The protein localises to the plastid. It localises to the chloroplast stroma. The enzyme catalyses Hydrolysis of proteins to small peptides in the presence of ATP and magnesium. alpha-casein is the usual test substrate. In the absence of ATP, only oligopeptides shorter than five residues are hydrolyzed (such as succinyl-Leu-Tyr-|-NHMec, and Leu-Tyr-Leu-|-Tyr-Trp, in which cleavage of the -Tyr-|-Leu- and -Tyr-|-Trp bonds also occurs).. Its function is as follows. Cleaves peptides in various proteins in a process that requires ATP hydrolysis. Has a chymotrypsin-like activity. Plays a major role in the degradation of misfolded proteins. This chain is ATP-dependent Clp protease proteolytic subunit, found in Gossypium hirsutum (Upland cotton).